We begin with the raw amino-acid sequence, 520 residues long: Acetyltransferase MAT1 (520 aa).

Residues His183 and Asp456 each act as proton acceptor in the active site.

It belongs to the plant acyltransferase family.

Its pathway is secondary metabolite biosynthesis. Acyl-CoA-dependent acyltransferase; part of the gene cluster that mediates the biosynthesis of mannosylerythritol lipids (MELs), surface-active substances that enhance the availability of water-insoluble substrates. Depending on the number of acetyl groups, mannosylerythritol lipids can be differentiated into MEL A (fully acetylated), MEL B and MEL C (monoacetylated at R-6 and R-4, respectively), and the fully deacetylated MEL D. The first step in the pathway is the generation of mannosylerythritol by the glycosyltransferase EMT1 which catalyzes the transfer of GDP-mannose to the C-4 atom of meso-erythritol. This reaction has to be stereospecific, since only mannosyl-D-erythritol is generated. The produced disaccharide is subsequently acylated with fatty acids of various lengths by the acyltransferases MAC1 and MAC2 at positions C-2 and C-3, repectively. The existence of MEL derivatives which carry an acetyl group at C-2 implies that at least MAC1 also accepts acetyl-CoA as a donor. The final step of MEL biosynthesis is the acetylation of the fully acylated mannosylerythritol lipids catalyzed by the acetyl-CoA-dependent acetyltransferase MAT1. MAT1 displays a relaxed regioselectivity and is able to transfer acetylgroups to both positions C-4 and C-6 of the mannosyl moiety. The protein is Acetyltransferase MAT1 of Pseudozyma antarctica (strain T-34) (Yeast).